The primary structure comprises 347 residues: uncharacterized protein (347 aa).

Mn(2+)-binding residues include aspartate 207, aspartate 218, histidine 279, glutamate 312, and glutamate 326.

The protein belongs to the peptidase M24B family. Requires Mn(2+) as cofactor.

This is an uncharacterized protein from Methanocaldococcus jannaschii (strain ATCC 43067 / DSM 2661 / JAL-1 / JCM 10045 / NBRC 100440) (Methanococcus jannaschii).